A 173-amino-acid polypeptide reads, in one-letter code: HTH-type transcriptional regulator IscR (173 aa).

Positions 2-131 (KLTSKGRYAV…NDITLGELMK (130 aa)) constitute an HTH rrf2-type domain. A DNA-binding region (H-T-H motif) is located at residues 28–51 (LADISERQGISLSYLEQLFSKLRK). Positions 92, 98, and 104 each coordinate [2Fe-2S] cluster.

Requires [2Fe-2S] cluster as cofactor.

Its function is as follows. Regulates the transcription of several operons and genes involved in the biogenesis of Fe-S clusters and Fe-S-containing proteins. The polypeptide is HTH-type transcriptional regulator IscR (Vibrio atlanticus (strain LGP32) (Vibrio splendidus (strain Mel32))).